Consider the following 130-residue polypeptide: Small ribosomal subunit protein uS9 (130 aa).

Residues D107–R130 form a disordered region. Positions K111–R130 are enriched in basic residues.

The protein belongs to the universal ribosomal protein uS9 family.

This Ligilactobacillus salivarius (strain UCC118) (Lactobacillus salivarius) protein is Small ribosomal subunit protein uS9.